A 447-amino-acid chain; its full sequence is uncharacterized protein (447 aa).

12 helical membrane passes run 17-37 (IMMMALGGAIGAGLFKGSSSA), 40-60 (VAGPSVIIAYLLGGIILLFIM), 95-115 (IYWKMWVLNIAAEAVVAAIFI), 118-138 (WLPGCPIWVLALGISLIVTIV), 154-174 (AMIKITVIIIFIILGLLLLFV), 200-220 (GLITAMLVVIYSYGGTEIIGV), 243-263 (IVAFYLLPFFIIVSLIPWNQV), 289-311 (AVILLAIISSMNSGLYGSSRILY), 333-353 (MFAILMCTSSLYIGVLISLFA), 361-381 (LMGSLGYTVLFIWLIIGFAHL), 393-415 (YYVKWFPYTTWFAIVALLAILIG), and 419-441 (TTSIVITGITAAIYLLITVAYLV).

The protein belongs to the amino acid-polyamine-organocation (APC) superfamily.

It localises to the cell membrane. Functionally, may participate in leucine metabolism. May transport leucine or a compound related to leucine metabolism. This is an uncharacterized protein from Bacillus subtilis (strain 168).